The chain runs to 585 residues: A-type ATP synthase subunit A (585 aa).

An ATP-binding site is contributed by 231–238; the sequence is GPFGSGKT.

This sequence belongs to the ATPase alpha/beta chains family. As to quaternary structure, has multiple subunits with at least A(3), B(3), C, D, E, F, H, I and proteolipid K(x).

The protein resides in the cell membrane. It catalyses the reaction ATP + H2O + 4 H(+)(in) = ADP + phosphate + 5 H(+)(out). In terms of biological role, component of the A-type ATP synthase that produces ATP from ADP in the presence of a proton gradient across the membrane. The A chain is the catalytic subunit. The chain is A-type ATP synthase subunit A from Thermococcus gammatolerans (strain DSM 15229 / JCM 11827 / EJ3).